The chain runs to 217 residues: Putative N-acetylmuramoyl-L-alanine amidase (217 aa).

A MurNAc-LAA domain is found at 3-206 (IAIDAGHGGQ…ISKSISIALK (204 aa)).

Belongs to the N-acetylmuramoyl-L-alanine amidase 3 family.

It localises to the secreted. It carries out the reaction Hydrolyzes the link between N-acetylmuramoyl residues and L-amino acid residues in certain cell-wall glycopeptides.. Functionally, cell-wall hydrolase involved in septum cleavage during cell division. The chain is Putative N-acetylmuramoyl-L-alanine amidase (amiB) from Buchnera aphidicola subsp. Baizongia pistaciae (strain Bp).